Consider the following 223-residue polypeptide: Probable amino-acid ABC transporter permease protein PatM (223 aa).

An ABC transmembrane type-1 domain is found at 19-210; sequence LGTTMEMATW…GVVVILTRVQ (192 aa). Helical transmembrane passes span 23–43, 59–78, 90–110, 156–176, and 186–206; these read MEMATWGLVFSLILSVILANI, ISFFRGTPLLVQLFLLYYGL, AFSAAVIGLTLHFAAYMAESI, FIDMIKSTSLAFTLGVAEIMA, and FRFFEAFLAVALIYWGVVVIL.

This sequence belongs to the binding-protein-dependent transport system permease family. HisMQ subfamily.

It is found in the cell inner membrane. Its function is as follows. Probably part of a binding-protein-dependent transport system for an amino acid. Probably responsible for the translocation of the substrate across the membrane. The polypeptide is Probable amino-acid ABC transporter permease protein PatM (patM) (Vibrio harveyi (Beneckea harveyi)).